We begin with the raw amino-acid sequence, 420 residues long: Trichothecene biosynthesis transcription regulator TRI10 (420 aa).

The protein belongs to the TRI10 transcription regulator family.

The protein localises to the nucleus. Transcriptional activator of all of the trichothecene biosynthesis genes. Acts upstream of the cluster-encoded transcription factor TRI6 and is necessary for full expression of both the other trichothecene genes and the genes for the primary metabolic pathway that precedes the trichothecene biosynthetic pathway. The polypeptide is Trichothecene biosynthesis transcription regulator TRI10 (Fusarium sporotrichioides).